Reading from the N-terminus, the 101-residue chain is NADH-quinone oxidoreductase subunit K (101 aa).

Transmembrane regions (helical) follow at residues 4–24, 30–50, and 65–85; these read LEHY…GLFL, IVLL…LVAF, and FVLT…VCFF.

This sequence belongs to the complex I subunit 4L family. In terms of assembly, NDH-1 is composed of 14 different subunits. Subunits NuoA, H, J, K, L, M, N constitute the membrane sector of the complex.

It is found in the cell inner membrane. The enzyme catalyses a quinone + NADH + 5 H(+)(in) = a quinol + NAD(+) + 4 H(+)(out). Functionally, NDH-1 shuttles electrons from NADH, via FMN and iron-sulfur (Fe-S) centers, to quinones in the respiratory chain. The immediate electron acceptor for the enzyme in this species is believed to be ubiquinone. Couples the redox reaction to proton translocation (for every two electrons transferred, four hydrogen ions are translocated across the cytoplasmic membrane), and thus conserves the redox energy in a proton gradient. The chain is NADH-quinone oxidoreductase subunit K from Ruegeria pomeroyi (strain ATCC 700808 / DSM 15171 / DSS-3) (Silicibacter pomeroyi).